Reading from the N-terminus, the 421-residue chain is uncharacterized protein (421 aa).

CBS domains lie at 13–74 (MTKD…VRSL), 74–133 (LMYK…MKDT), 139–195 (MTRN…PKKK), and 217–274 (MNTP…KGAM).

This is an uncharacterized protein from Methanocaldococcus jannaschii (strain ATCC 43067 / DSM 2661 / JAL-1 / JCM 10045 / NBRC 100440) (Methanococcus jannaschii).